The sequence spans 326 residues: Target of rapamycin complex subunit lst8 (326 aa).

7 WD repeats span residues 1–37 (MNSNQGTVGSDPVILATAGYDHTVRFWQAHSGICTRT), 40–80 (HQDS…PVIN), 83–122 (GVSKNITSVGFHEDGRWMYTGGEDCMARIWDLRSRNLQCQ), 126–165 (QVNAPINCVFLHPNQAELIVGDQSGAIHIWDLKTDQNEQL), 168–207 (ETDVSINSVHIDPDASYMAAVNSSGNCFVWNLTGGLGEDL), 218–257 (AHKRCALKCKFSPDSTLLATCSADQTCKIWRTSNFSLMTE), and 268–309 (TSRG…REYS).

It belongs to the WD repeat LST8 family. Part of the mechanistic target of rapamycin complex 1 (mTORC1) which contains MTOR, MLST8 and RPTOR. Component of the mechanistic target of rapamycin complex 2 (mTORC2), consisting in two heterotretramers composed of MTOR, MLST8, RICTOR and MAPKAP1/SIN1.

It localises to the lysosome membrane. It is found in the cytoplasm. In terms of biological role, subunit of both mTORC1 and mTORC2, which regulates cell growth and survival in response to nutrient and hormonal signals. mTORC1 is activated in response to growth factors or amino acids. In response to nutrients, mTORC1 is recruited to the lysosome membrane and promotes protein, lipid and nucleotide synthesis by phosphorylating several substrates, such as ribosomal protein S6 kinase (RPS6KB1 and RPS6KB2) and EIF4EBP1 (4E-BP1). In the same time, it inhibits catabolic pathways by phosphorylating the autophagy initiation components ULK1 and ATG13, as well as transcription factor TFEB, a master regulators of lysosomal biogenesis and autophagy. The mTORC1 complex is inhibited in response to starvation and amino acid depletion. Within mTORC1, MLST8 interacts directly with MTOR and enhances its kinase activity. In nutrient-poor conditions, stabilizes the MTOR-RPTOR interaction and favors RPTOR-mediated inhibition of MTOR activity. As part of the mTORC2 complex, transduces signals from growth factors to pathways involved in proliferation, cytoskeletal organization, lipogenesis and anabolic output. mTORC2 is also activated by growth factors, but seems to be nutrient-insensitive. In response to growth factors, mTORC2 phosphorylates and activates AGC protein kinase family members, including AKT (AKT1, AKT2 and AKT3), PKC (PRKCA, PRKCB and PRKCE) and SGK1. mTORC2 functions upstream of Rho GTPases to regulate the actin cytoskeleton, probably by activating one or more Rho-type guanine nucleotide exchange factors. mTORC2 promotes the serum-induced formation of stress-fibers or F-actin. Within mTORC2, MLST8 acts as a bridge between MAPKAP1/SIN1 and MTOR. The protein is Target of rapamycin complex subunit lst8 (mlst8) of Xenopus tropicalis (Western clawed frog).